Here is a 346-residue protein sequence, read N- to C-terminus: N-acetyl-gamma-glutamyl-phosphate reductase (346 aa).

Cys154 is a catalytic residue.

The protein belongs to the NAGSA dehydrogenase family. Type 1 subfamily.

The protein localises to the cytoplasm. The enzyme catalyses N-acetyl-L-glutamate 5-semialdehyde + phosphate + NADP(+) = N-acetyl-L-glutamyl 5-phosphate + NADPH + H(+). The protein operates within amino-acid biosynthesis; L-arginine biosynthesis; N(2)-acetyl-L-ornithine from L-glutamate: step 3/4. Functionally, catalyzes the NADPH-dependent reduction of N-acetyl-5-glutamyl phosphate to yield N-acetyl-L-glutamate 5-semialdehyde. The chain is N-acetyl-gamma-glutamyl-phosphate reductase from Rhodopirellula baltica (strain DSM 10527 / NCIMB 13988 / SH1).